Reading from the N-terminus, the 305-residue chain is tRNA pseudouridine synthase B (305 aa).

The active-site Nucleophile is Asp41.

This sequence belongs to the pseudouridine synthase TruB family. Type 1 subfamily.

The catalysed reaction is uridine(55) in tRNA = pseudouridine(55) in tRNA. Functionally, responsible for synthesis of pseudouridine from uracil-55 in the psi GC loop of transfer RNAs. This Prochlorococcus marinus subsp. pastoris (strain CCMP1986 / NIES-2087 / MED4) protein is tRNA pseudouridine synthase B.